The sequence spans 530 residues: Anthranilate synthase component 1, pyocyanine specific (530 aa).

331–332 (GT) lines the substrate pocket. E364 contacts Mg(2+). Substrate is bound by residues Y452, R472, 486–488 (GAG), and G488. Position 501 (E501) interacts with Mg(2+).

This sequence belongs to the anthranilate synthase component I family. As to quaternary structure, heterotetramer consisting of two non-identical subunits: a beta subunit (PhnB) and a large alpha subunit (PhnA). Requires Mg(2+) as cofactor.

It carries out the reaction chorismate + L-glutamine = anthranilate + pyruvate + L-glutamate + H(+). It functions in the pathway secondary metabolite biosynthesis; pyocyanine biosynthesis. Its function is as follows. Part of a heterotetrameric complex that catalyzes the two-step biosynthesis of anthranilate, a precursor for Pseudomonas quinolone signal (2-heptyl-3-hydroxy-4-quinolone; PQS) production which is required to induce the genes for the biosynthesis of the virulence factor pyocyanine (PCN), a characteristic blue-green phenazine pigment produced by P.aeruginosa. In the first step, the glutamine-binding beta subunit (PhnB) of anthranilate synthase (AS) provides the glutamine amidotransferase activity which generates ammonia as a substrate that, along with chorismate, is used in the second step, catalyzed by the large alpha subunit of AS (PhnA) to produce anthranilate. The sequence is that of Anthranilate synthase component 1, pyocyanine specific from Pseudomonas aeruginosa (strain ATCC 15692 / DSM 22644 / CIP 104116 / JCM 14847 / LMG 12228 / 1C / PRS 101 / PAO1).